The following is a 285-amino-acid chain: Inositol polyphosphate 1-phosphatase (285 aa).

The Mg(2+) site is built by glutamate 68, aspartate 106, leucine 108, and aspartate 109. The 1D-myo-inositol 1,4-bisphosphate site is built by aspartate 109, glycine 110, threonine 111, serine 173, glycine 195, serine 197, and lysine 200. Mg(2+) is bound at residue aspartate 223.

Belongs to the inositol monophosphatase superfamily. As to quaternary structure, monomer. It depends on Mg(2+) as a cofactor.

It is found in the cytoplasm. It catalyses the reaction 1D-myo-inositol 1,4-bisphosphate + H2O = 1D-myo-inositol 4-phosphate + phosphate. The catalysed reaction is adenosine 3',5'-bisphosphate + H2O = AMP + phosphate. Its activity is regulated as follows. Partially inhibited by Li(2+). Catalyzes the hydrolysis of the 1-position phosphate from inositol 1,4-bisphosphate. Is also able to convert 3'(2')-phosphoadenosine 5'-phosphate (PAP) to AMP but with less efficiency. This is Inositol polyphosphate 1-phosphatase from Entamoeba histolytica (strain ATCC 30459 / HM-1:IMSS / ABRM).